Here is a 250-residue protein sequence, read N- to C-terminus: Small ribosomal subunit protein uS2 (250 aa).

Belongs to the universal ribosomal protein uS2 family.

The chain is Small ribosomal subunit protein uS2 from Paraburkholderia phytofirmans (strain DSM 17436 / LMG 22146 / PsJN) (Burkholderia phytofirmans).